A 365-amino-acid polypeptide reads, in one-letter code: Phosphate acyltransferase (365 aa).

Belongs to the PlsX family. As to quaternary structure, homodimer. Probably interacts with PlsY.

The protein localises to the cytoplasm. The enzyme catalyses a fatty acyl-[ACP] + phosphate = an acyl phosphate + holo-[ACP]. Its pathway is lipid metabolism; phospholipid metabolism. Its function is as follows. Catalyzes the reversible formation of acyl-phosphate (acyl-PO(4)) from acyl-[acyl-carrier-protein] (acyl-ACP). This enzyme utilizes acyl-ACP as fatty acyl donor, but not acyl-CoA. This Jannaschia sp. (strain CCS1) protein is Phosphate acyltransferase.